Reading from the N-terminus, the 399-residue chain is S-adenosylmethionine synthase (399 aa).

His-16 is a binding site for ATP. Residue Asp-18 participates in Mg(2+) binding. A K(+)-binding site is contributed by Glu-44. 2 residues coordinate L-methionine: Glu-57 and Gln-100. A flexible loop region spans residues 100 to 110 (QSPDIAQGVDT). ATP is bound by residues 175 to 177 (DGK), 246 to 247 (KF), Asp-255, 261 to 262 (RK), Ala-278, and Lys-282. Residue Asp-255 participates in L-methionine binding. An L-methionine-binding site is contributed by Lys-286. Lys-341 is covalently cross-linked (Isoglutamyl lysine isopeptide (Lys-Gln) (interchain with Q-Cter in protein Pup)).

It belongs to the AdoMet synthase family. As to quaternary structure, homotetramer; dimer of dimers. Mg(2+) is required as a cofactor. The cofactor is K(+).

It localises to the cytoplasm. It carries out the reaction L-methionine + ATP + H2O = S-adenosyl-L-methionine + phosphate + diphosphate. It participates in amino-acid biosynthesis; S-adenosyl-L-methionine biosynthesis; S-adenosyl-L-methionine from L-methionine: step 1/1. Its function is as follows. Catalyzes the formation of S-adenosylmethionine (AdoMet) from methionine and ATP. The overall synthetic reaction is composed of two sequential steps, AdoMet formation and the subsequent tripolyphosphate hydrolysis which occurs prior to release of AdoMet from the enzyme. This is S-adenosylmethionine synthase from Mycolicibacterium smegmatis (strain ATCC 700084 / mc(2)155) (Mycobacterium smegmatis).